The chain runs to 164 residues: Phosphopantetheine adenylyltransferase (164 aa).

Thr-10 serves as a coordination point for substrate. Residues 10 to 11 (TF) and His-18 contribute to the ATP site. 3 residues coordinate substrate: Lys-44, Leu-76, and Arg-90. ATP contacts are provided by residues 91 to 93 (GLR), Glu-101, and 126 to 132 (YAFISSS).

It belongs to the bacterial CoaD family. As to quaternary structure, homohexamer. Mg(2+) is required as a cofactor.

It is found in the cytoplasm. It catalyses the reaction (R)-4'-phosphopantetheine + ATP + H(+) = 3'-dephospho-CoA + diphosphate. Its pathway is cofactor biosynthesis; coenzyme A biosynthesis; CoA from (R)-pantothenate: step 4/5. In terms of biological role, reversibly transfers an adenylyl group from ATP to 4'-phosphopantetheine, yielding dephospho-CoA (dPCoA) and pyrophosphate. In Halorhodospira halophila (strain DSM 244 / SL1) (Ectothiorhodospira halophila (strain DSM 244 / SL1)), this protein is Phosphopantetheine adenylyltransferase.